A 720-amino-acid polypeptide reads, in one-letter code: 1-deoxy-D-xylulose-5-phosphate synthase 1, chloroplastic (720 aa).

Residues 1-51 constitute a chloroplast transit peptide; that stretch reads MALTTFSISRGGFVGALPQEGHFAPAAAELSLHKLQSRPHKARRRSSSSIS. The span at 35–46 shows a compositional bias: basic residues; the sequence is LQSRPHKARRRS. Residues 35 to 74 are disordered; it reads LQSRPHKARRRSSSSISASLSTEREAAEYHSQRPPTPLLD. Basic and acidic residues predominate over residues 56–65; the sequence is TEREAAEYHS. Residues His-142 and 183-185 contribute to the thiamine diphosphate site; that span reads GHS. Asp-214 is a binding site for Mg(2+). Residues 215-216, Asn-243, Tyr-364, and Glu-446 each bind thiamine diphosphate; that span reads GA. Residue Asn-243 participates in Mg(2+) binding.

Belongs to the transketolase family. DXPS subfamily. As to quaternary structure, homodimer. Mg(2+) serves as cofactor. It depends on thiamine diphosphate as a cofactor.

The protein resides in the plastid. It is found in the chloroplast stroma. It catalyses the reaction D-glyceraldehyde 3-phosphate + pyruvate + H(+) = 1-deoxy-D-xylulose 5-phosphate + CO2. It participates in metabolic intermediate biosynthesis; 1-deoxy-D-xylulose 5-phosphate biosynthesis; 1-deoxy-D-xylulose 5-phosphate from D-glyceraldehyde 3-phosphate and pyruvate: step 1/1. Its function is as follows. Catalyzes the acyloin condensation reaction between C atoms 2 and 3 of pyruvate and glyceraldehyde 3-phosphate to yield 1-deoxy-D-xylulose-5-phosphate (DXP). Is a limiting enzyme for plastidic isoprenoid biosynthesis and essential for chloroplast development. This Oryza sativa subsp. japonica (Rice) protein is 1-deoxy-D-xylulose-5-phosphate synthase 1, chloroplastic (CLA1).